Here is a 496-residue protein sequence, read N- to C-terminus: Endoglucanase (496 aa).

The N-terminal stretch at 1-23 (MGYHSVFIAVFLWSSMVCHNGLA) is a signal peptide. The active-site Nucleophile is aspartate 93. Catalysis depends on residues histidine 415, aspartate 467, and glutamate 476.

This sequence belongs to the glycosyl hydrolase 9 (cellulase E) family.

The enzyme catalyses Endohydrolysis of (1-&gt;4)-beta-D-glucosidic linkages in cellulose, lichenin and cereal beta-D-glucans.. Its function is as follows. Involved in ripening fruit process. This chain is Endoglucanase, found in Phaseolus vulgaris (Kidney bean).